Consider the following 530-residue polypeptide: Bifunctional purine biosynthesis protein PurH (530 aa).

The MGS-like domain maps to 1 to 148; that stretch reads MNNARPIRRA…KNHKDVTIVV (148 aa).

It belongs to the PurH family.

It catalyses the reaction (6R)-10-formyltetrahydrofolate + 5-amino-1-(5-phospho-beta-D-ribosyl)imidazole-4-carboxamide = 5-formamido-1-(5-phospho-D-ribosyl)imidazole-4-carboxamide + (6S)-5,6,7,8-tetrahydrofolate. The enzyme catalyses IMP + H2O = 5-formamido-1-(5-phospho-D-ribosyl)imidazole-4-carboxamide. Its pathway is purine metabolism; IMP biosynthesis via de novo pathway; 5-formamido-1-(5-phospho-D-ribosyl)imidazole-4-carboxamide from 5-amino-1-(5-phospho-D-ribosyl)imidazole-4-carboxamide (10-formyl THF route): step 1/1. It functions in the pathway purine metabolism; IMP biosynthesis via de novo pathway; IMP from 5-formamido-1-(5-phospho-D-ribosyl)imidazole-4-carboxamide: step 1/1. In Aliivibrio fischeri (strain ATCC 700601 / ES114) (Vibrio fischeri), this protein is Bifunctional purine biosynthesis protein PurH.